A 160-amino-acid polypeptide reads, in one-letter code: Calcium and integrin-binding family member 3 (160 aa).

3 EF-hand domains span residues 39 to 74, 76 to 111, and 117 to 152; these read KDNPFRQRIAQVFSQDGDGHMTLENFLDMFSVMSEM, PRDLKAYYAFKIYDFNNDNYICAWDLEQTVTRLTRG, and EVTLVCEKVLDEADGDQDGRLSLEDFQNMILRAPDF. Residues D89, N91, D93, Y95, D100, D130, D132, D134, R136, and D141 each contribute to the Ca(2+) site.

Monomer and homodimer. Interacts with ITGA2B (via C-terminus cytoplasmic tail region); the interaction is stabilized/increased in a calcium and magnesium-dependent manner. Interacts with TMC1. Expressed in heart, liver and inner ear. In the inner ear, expressed in vestibule and basilar membrane cells. Expressed in megakaryocytes and endothelial cells.

Its function is as follows. Acts as an auxiliary subunit of the sensory mechanoelectrical transduction (MET) channel in hair cells. Plays a role in regulating hair cell MET channel localization and function. This Mus musculus (Mouse) protein is Calcium and integrin-binding family member 3 (Cib3).